We begin with the raw amino-acid sequence, 882 residues long: Piwi-like protein 3 (882 aa).

The segment covering 1–15 (MPGRARTRARGRARR) has biased composition (basic residues). The interval 1–91 (MPGRARTRAR…EAGLHTAPLQ (91 aa)) is disordered. Polar residues predominate over residues 32–46 (SATTQEPPQLQSTPR). In terms of domain architecture, PAZ spans 293-406 (TAYDFIKRTS…LIPQLCHMTG (114 aa)). Residues 578 to 868 (KVICILPNDD…LAYLVGQSIH (291 aa)) enclose the Piwi domain.

This sequence belongs to the argonaute family. Piwi subfamily. As to expression, expressed in testis.

Its subcellular location is the cytoplasm. May play a role during spermatogenesis by repressing transposable elements and preventing their mobilization, which is essential for the germline integrity. Acts via the piRNA metabolic process, which mediates the repression of transposable elements during meiosis by forming complexes composed of piRNAs and Piwi proteins and govern the methylation and subsequent repression of transposons. Directly binds piRNAs, a class of 24 to 30 nucleotide RNAs that are generated by a Dicer-independent mechanism and are primarily derived from transposons and other repeated sequence elements. Besides their function in transposable elements repression, piRNAs are probably involved in other processes during meiosis such as translation regulation. This is Piwi-like protein 3 (PIWIL3) from Homo sapiens (Human).